We begin with the raw amino-acid sequence, 417 residues long: 4-hydroxy-3-methylbut-2-en-1-yl diphosphate synthase (flavodoxin) (417 aa).

Cysteine 304, cysteine 307, cysteine 350, and glutamate 357 together coordinate [4Fe-4S] cluster.

This sequence belongs to the IspG family. [4Fe-4S] cluster serves as cofactor.

The catalysed reaction is (2E)-4-hydroxy-3-methylbut-2-enyl diphosphate + oxidized [flavodoxin] + H2O + 2 H(+) = 2-C-methyl-D-erythritol 2,4-cyclic diphosphate + reduced [flavodoxin]. Its pathway is isoprenoid biosynthesis; isopentenyl diphosphate biosynthesis via DXP pathway; isopentenyl diphosphate from 1-deoxy-D-xylulose 5-phosphate: step 5/6. In terms of biological role, converts 2C-methyl-D-erythritol 2,4-cyclodiphosphate (ME-2,4cPP) into 1-hydroxy-2-methyl-2-(E)-butenyl 4-diphosphate. In Rhizobium rhizogenes (strain K84 / ATCC BAA-868) (Agrobacterium radiobacter), this protein is 4-hydroxy-3-methylbut-2-en-1-yl diphosphate synthase (flavodoxin).